A 547-amino-acid chain; its full sequence is Mucin-13 (547 aa).

A compositionally biased stretch (low complexity) spans 1–210 (MSQSSGGTST…TVTSSSSTGS (210 aa)). The segment at 1-218 (MSQSSGGTST…GSNDPCNSNP (218 aa)) is disordered. The EGF-like 1 domain maps to 210-249 (SNDPCNSNPCKSPASCVKLYDSYFCLCLEGYYYNNSSSCV). 3 disulfide bridges follow: C214/C225, C219/C234, and C236/C248. Residues N243, N244, and N263 are each glycosylated (N-linked (GlcNAc...) asparagine). Residues 250 to 366 (KGTTFPGEIG…ERYFQQDRCD (117 aa)) enclose the SEA domain. 2 consecutive EGF-like domains span residues 361–401 (QQDR…PFCV) and 401–441 (VAPT…GKCE). 5 cysteine pairs are disulfide-bonded: C365–C378, C370–C384, C386–C400, C409–C427, and C429–C440. A helical transmembrane segment spans residues 459–479 (ILTIVGTIAGAFILILLIVFI). The Cytoplasmic segment spans residues 480–547 (VSMRSKNKKK…NHRSMPRPDY (68 aa)). The disordered stretch occupies residues 525 to 547 (KTGVPSQTSNPYANHRSMPRPDY).

Homodimer of beta subunits. Cleaved into two subunits, alpha and beta, probably between the first EGF domain and the SEA domain. Beta subunit contains the cytoplasmic tail and alpha subunit the extracellular tail. The homooligomerization into dimers is dependent on intrachain disulfide bonds. Post-translationally, highly glycosylated.

It is found in the cell membrane. It localises to the secreted. In terms of biological role, epithelial and hemopoietic transmembrane mucin that may play a role in cell signaling. The protein is Mucin-13 (Muc13) of Rattus norvegicus (Rat).